A 549-amino-acid polypeptide reads, in one-letter code: Cation/acetate symporter ActP (549 aa).

Transmembrane regions (helical) follow at residues 33 to 53, 77 to 97, 103 to 123, 148 to 168, 183 to 203, 206 to 226, 262 to 282, 303 to 323, 355 to 375, 404 to 424, 428 to 448, 464 to 484, and 493 to 513; these read WQAI…TYWA, LAIA…ALVF, GLIY…LIAE, ILSA…QMVG, IAVV…GMLA, WVQI…AFMV, ISAL…PHIL, GFMG…IMLV, LFLG…VAGL, VSKI…VLFE, IAFM…PIIL, GGWL…TIWV, and IFPY…GIWF.

This sequence belongs to the sodium:solute symporter (SSF) (TC 2.A.21) family.

The protein localises to the cell inner membrane. Its function is as follows. Transports acetate. This Salmonella gallinarum (strain 287/91 / NCTC 13346) protein is Cation/acetate symporter ActP.